The following is a 399-amino-acid chain: Lipid droplet-regulating VLDL assembly factor AUP1 (399 aa).

Over 1–21 (MEQPSLESMLELQRFPRNPFS) the chain is Cytoplasmic. Residues 22 to 42 (LVLLLLYFPFGLCLFLIRLFI) lie within the membrane without spanning it. Residues 43-399 (GAHVFLVSCV…GEEEEEGARG (357 aa)) are Cytoplasmic-facing. In terms of domain architecture, CUE spans 284 to 326 (THIQMAQHVKEVLPQVPLSAIHRDLGHTGCVDTTITNFLEGRV). The tract at residues 332–364 (EEETTGAAEGTSKSRVSRPLPQGFAKKPEDRHL) is disordered.

This sequence belongs to the AUP1 family.

The protein resides in the endoplasmic reticulum membrane. The protein localises to the lipid droplet. Plays a role in the translocation of terminally misfolded proteins from the endoplasmic reticulum lumen to the cytoplasm and their degradation by the proteasome. Plays a role in lipid droplet formation. Induces lipid droplet clustering. This Xenopus laevis (African clawed frog) protein is Lipid droplet-regulating VLDL assembly factor AUP1.